Reading from the N-terminus, the 90-residue chain is Progonadoliberin-3 (90 aa).

A signal peptide spans 1–23 (MEANSRVMVRVLLLALVVQVTLS). Gln-24 carries the post-translational modification Pyrrolidone carboxylic acid. Residue Gly-33 is modified to Glycine amide. The disordered stretch occupies residues 56-90 (LPEEASAQTQERLRPYNVINDDSSHFDRKKRSPNK).

This sequence belongs to the GnRH family.

The protein resides in the secreted. Its function is as follows. Stimulates the secretion of gonadotropins. The chain is Progonadoliberin-3 (gnrh3) from Dicentrarchus labrax (European seabass).